The sequence spans 867 residues: V-set and immunoglobulin domain-containing protein 10-like (867 aa).

Positions 1–27 (MDNPQALPLFLLLASLVGILTLRASSG) are cleaved as a signal peptide. The Extracellular segment spans residues 28 to 776 (LQQTNFSSAF…RAGPTLSHGA (749 aa)). Asparagine 32 carries N-linked (GlcNAc...) asparagine glycosylation. Low complexity predominate over residues 35–45 (SAFSSDSKSSS). A disordered region spans residues 35–60 (SAFSSDSKSSSQGLGVEVPSIKPPSW). N-linked (GlcNAc...) asparagine glycans are attached at residues asparagine 88, asparagine 96, and asparagine 144. The interval 104–186 (LSPVSPFSET…PESKFSAETH (83 aa)) is disordered. Over residues 137 to 153 (TVKTPASNISTQVSHTK) the composition is skewed to polar residues. Residues 159 to 170 (PDSKFSPDDMDL) are compositionally biased toward basic and acidic residues. Residues 173–186 (SAQSPESKFSAETH) show a composition bias toward polar residues. 2 consecutive Ig-like C2-type domains span residues 302–394 (PQLS…ADVS) and 402–487 (PTIT…SLLN). Cysteine 324 and cysteine 378 are disulfide-bonded. Residue asparagine 423 is glycosylated (N-linked (GlcNAc...) asparagine). The cysteines at positions 428 and 471 are disulfide-linked. A glycan (N-linked (GlcNAc...) asparagine) is linked at asparagine 487. Residues 602–627 (ASGCPPPSRASWAREGRPLAPGGGSR) form a disordered region. 2 N-linked (GlcNAc...) asparagine glycosylation sites follow: asparagine 641 and asparagine 650. The helical transmembrane segment at 777-797 (IAGIVLGSLLGLALLAVLLLL) threads the bilayer. Over 798–867 (CICCLCRFRG…QAQTPVQLSL (70 aa)) the chain is Cytoplasmic.

As to expression, expressed in the esophagus, particularly in the suprabasilar layers of the epithelium. Expression is largely reduced in esophageal metaplasia, dysplasia, and adenocarcinoma lesions.

The protein localises to the membrane. The protein is V-set and immunoglobulin domain-containing protein 10-like (VSIG10L) of Homo sapiens (Human).